We begin with the raw amino-acid sequence, 353 residues long: Keratocan (353 aa).

A signal peptide spans 1–21; it reads MMTLKVCPSLLLLFLVHSVWT. Residues 34-72 form the LRRNT domain; it reads EHWSHYTFECPQECFCPPSFPNALYCDNKGLKEIPAIPA. Disulfide bonds link cysteine 43–cysteine 49 and cysteine 47–cysteine 59. LRR repeat units follow at residues 73–94, 97–118, 123–143, 144–165, 168–188, 194–214, 215–236, 239–262, 264–283, and 284–305; these read RIWY…PFVN, HLRW…SGVL, RLLY…PLPV, GLEQ…VFSN, NLTM…QSDT, SLMQ…SIPA, NTLQ…YFSA, KVTF…GFNV, SILD…PINA, and HLEH…QICP. The N-linked (GlcNAc...) (keratan sulfate) asparagine glycan is linked to asparagine 94. N-linked (GlcNAc...) asparagine glycosylation is present at asparagine 168. N-linked (GlcNAc...) (keratan sulfate) asparagine glycans are attached at residues asparagine 223 and asparagine 261. A glycan (N-linked (GlcNAc...) asparagine) is linked at asparagine 299. Cysteine 304 and cysteine 344 are oxidised to a cystine.

It belongs to the small leucine-rich proteoglycan (SLRP) family. SLRP class II subfamily. Post-translationally, binds keratan sulfate chains.

It is found in the secreted. The protein localises to the extracellular space. The protein resides in the extracellular matrix. Functionally, plays an important role in generating and maintaining a transparent matrix within the corneal stroma. The sequence is that of Keratocan (KERA) from Gallus gallus (Chicken).